The sequence spans 100 residues: Acylphosphatase (100 aa).

The Acylphosphatase-like domain maps to 14 to 100 (RWRFFVEGKV…TGADWFEIRS (87 aa)). Residues Arg29 and Asn47 contribute to the active site.

The protein belongs to the acylphosphatase family.

It catalyses the reaction an acyl phosphate + H2O = a carboxylate + phosphate + H(+). This Synechococcus sp. (strain WH7803) protein is Acylphosphatase (acyP).